Reading from the N-terminus, the 281-residue chain is NADPH-dependent 7-cyano-7-deazaguanine reductase (281 aa).

A substrate-binding site is contributed by 87 to 89; the sequence is IES. 89–90 contributes to the NADPH binding site; sequence SK. Catalysis depends on Cys-188, which acts as the Thioimide intermediate. Asp-195 (proton donor) is an active-site residue. Position 227–228 (227–228) interacts with substrate; sequence HE. 256–257 contributes to the NADPH binding site; it reads RG. Residues 261 to 281 are disordered; sequence INPYRSTEQAKPDHNHRMARQ. Residues 268 to 281 are compositionally biased toward basic and acidic residues; sequence EQAKPDHNHRMARQ.

The protein belongs to the GTP cyclohydrolase I family. QueF type 2 subfamily. Homodimer.

The protein localises to the cytoplasm. The catalysed reaction is 7-aminomethyl-7-carbaguanine + 2 NADP(+) = 7-cyano-7-deazaguanine + 2 NADPH + 3 H(+). It functions in the pathway tRNA modification; tRNA-queuosine biosynthesis. Catalyzes the NADPH-dependent reduction of 7-cyano-7-deazaguanine (preQ0) to 7-aminomethyl-7-deazaguanine (preQ1). This is NADPH-dependent 7-cyano-7-deazaguanine reductase from Vibrio vulnificus (strain YJ016).